Consider the following 469-residue polypeptide: Asparagine--tRNA ligase (469 aa).

The protein belongs to the class-II aminoacyl-tRNA synthetase family. As to quaternary structure, homodimer.

The protein localises to the cytoplasm. It catalyses the reaction tRNA(Asn) + L-asparagine + ATP = L-asparaginyl-tRNA(Asn) + AMP + diphosphate + H(+). This is Asparagine--tRNA ligase from Porphyromonas gingivalis (strain ATCC 33277 / DSM 20709 / CIP 103683 / JCM 12257 / NCTC 11834 / 2561).